Reading from the N-terminus, the 271-residue chain is Insulin-like growth factor-binding protein 5 (271 aa).

A signal peptide spans 1 to 19 (MVLTAVLLLLAACAGPAQG). An IGFBP N-terminal domain is found at 22–102 (SFVHCEPCDE…LHGRGVCLNE (81 aa)). Cystine bridges form between Cys26–Cys52, Cys29–Cys54, Cys37–Cys55, Cys44–Cys58, Cys66–Cys79, and Cys73–Cys99. Positions 109 to 121 (AKIERDSREHEEP) are enriched in basic and acidic residues. The interval 109–129 (AKIERDSREHEEPTTSEMAEE) is disordered. Position 115 is a phosphoserine (Ser115). In terms of domain architecture, Thyroglobulin type-1 spans 188-262 (QGPCRRHMEA…MEYVDGDFQC (75 aa)). Cystine bridges form between Cys191/Cys218, Cys229/Cys240, and Cys242/Cys262.

As to quaternary structure, interacts with IGF1; this interaction enhances the growth stimulatory effects of IGF1 on fibroblasts. Interacts with CAV1; this interaction allows trafficking of IGFBP5 from the plasma membrane to the nucleus. Interacts with NCL; this interaction is necessary for IGFBP5 localization to the nucleus.

The protein localises to the secreted. It localises to the cytoplasm. Its subcellular location is the nucleus. Functionally, multifunctional protein that plays a critical role in regulating the availability of IGFs to their receptors and thereby regulates IGF-mediated cellular processes including proliferation, differentiation, and apoptosis in a cell-type specific manner. Increases the cell proliferation of osteoblasts, intestinal smooth muscle cells and neuroblastoma cells. Enhances adhesion and survival of epithelial cells but decreases adhesion of mesenchymal cells. Once secreted, acts as a major mediator of mTORC1-dependent feedback inhibition of IGF1 signaling. Also plays a role in the induction of extracellular matrix (ECM) production and deposition independently of its nuclear translocation and binding to IGFs. Acts itself as a growth factor that can act independently of IGFs to regulate bone formation. Acts as a ligand for the ROR1 receptor which triggers formation of ROR1/HER2 heterodimer to enhance CREB oncogenic signaling. The protein is Insulin-like growth factor-binding protein 5 (IGFBP5) of Sus scrofa (Pig).